The following is a 415-amino-acid chain: Mitochondrial distribution and morphology protein 12 (415 aa).

Residues 1–402 form the SMP-LTD domain; that stretch reads MSFDINWSEL…WPSWVCFDLN (402 aa). The tract at residues 53 to 146 is disordered; sequence EITIRHIGDP…PPLTDLRRSR (94 aa). 2 stretches are compositionally biased toward acidic residues: residues 62-75 and 92-103; these read PFDD…DDDE and NSSDDDEDDEYD.

Belongs to the MDM12 family. Component of the ER-mitochondria encounter structure (ERMES) or MDM complex, composed of MMM1, MDM10, MDM12 and MDM34. An MMM1 homodimer associates with one molecule of MDM12 on each side in a pairwise head-to-tail manner, and the SMP-LTD domains of MMM1 and MDM12 generate a continuous hydrophobic tunnel for phospholipid trafficking.

Its subcellular location is the mitochondrion outer membrane. The protein resides in the endoplasmic reticulum membrane. Its function is as follows. Component of the ERMES/MDM complex, which serves as a molecular tether to connect the endoplasmic reticulum (ER) and mitochondria. Components of this complex are involved in the control of mitochondrial shape and protein biogenesis, and function in nonvesicular lipid trafficking between the ER and mitochondria. MDM12 is required for the interaction of the ER-resident membrane protein MMM1 and the outer mitochondrial membrane-resident beta-barrel protein MDM10. The MDM12-MMM1 subcomplex functions in the major beta-barrel assembly pathway that is responsible for biogenesis of all mitochondrial outer membrane beta-barrel proteins, and acts in a late step after the SAM complex. The MDM10-MDM12-MMM1 subcomplex further acts in the TOM40-specific pathway after the action of the MDM12-MMM1 complex. Essential for establishing and maintaining the structure of mitochondria and maintenance of mtDNA nucleoids. The sequence is that of Mitochondrial distribution and morphology protein 12 from Debaryomyces hansenii (strain ATCC 36239 / CBS 767 / BCRC 21394 / JCM 1990 / NBRC 0083 / IGC 2968) (Yeast).